We begin with the raw amino-acid sequence, 471 residues long: Glutamate--tRNA ligase (471 aa).

The short motif at 9 to 19 is the 'HIGH' region element; that stretch reads PSPTGYLHVGG. Zn(2+)-binding residues include cysteine 98, cysteine 100, cysteine 125, and histidine 127. Positions 237–241 match the 'KMSKS' region motif; sequence KLSKR. Position 240 (lysine 240) interacts with ATP.

The protein belongs to the class-I aminoacyl-tRNA synthetase family. Glutamate--tRNA ligase type 1 subfamily. Monomer. The cofactor is Zn(2+).

It is found in the cytoplasm. It catalyses the reaction tRNA(Glu) + L-glutamate + ATP = L-glutamyl-tRNA(Glu) + AMP + diphosphate. Functionally, catalyzes the attachment of glutamate to tRNA(Glu) in a two-step reaction: glutamate is first activated by ATP to form Glu-AMP and then transferred to the acceptor end of tRNA(Glu). This chain is Glutamate--tRNA ligase, found in Cronobacter sakazakii (strain ATCC BAA-894) (Enterobacter sakazakii).